A 333-amino-acid chain; its full sequence is HTH-type transcriptional repressor PurR (333 aa).

An HTH lacI-type domain is found at 2 to 56; sequence ATIKDVAKMAGVSTTTVSHVINKTRFVAKETEQQVLQAIKNLNYSPSAVARSLKV. A DNA-binding region (H-T-H motif) is located at residues 4–23; sequence IKDVAKMAGVSTTTVSHVIN. The DNA-binding element occupies 48–56; it reads SAVARSLKV. Hypoxanthine contacts are provided by Y73, K189, T191, F220, and D274.

As to quaternary structure, homodimer.

The protein operates within purine metabolism; purine nucleotide biosynthesis [regulation]. Is the main repressor of the genes involved in the de novo synthesis of purine nucleotides, regulating purB, purC, purEK, purF, purHD, purL, purMN and guaBA expression. PurR is allosterically activated to bind its cognate DNA by binding the purine corepressors, hypoxanthine or guanine, thereby effecting transcription repression. The chain is HTH-type transcriptional repressor PurR from Histophilus somni (strain 129Pt) (Haemophilus somnus).